We begin with the raw amino-acid sequence, 1675 residues long: Clathrin heavy chain 1 (1675 aa).

A2 bears the N-acetylalanine mark. The segment at 2 to 479 (AQILPIRFQE…VDPTLALSVY (478 aa)) is globular terminal domain. WD40-like repeat regions lie at residues 24–67 (NIGF…RPIS), 68–107 (ADSA…MTDD), 108–149 (VTFW…SSLA), 150–195 (GCQI…QPIE), 196–257 (GHAA…PEAQ), 258–301 (NDFP…ISGE), and 302–330 (TIFV…VCVE). S67 carries the phosphoserine modification. T105 carries the post-translational modification Phosphothreonine. Position 184 is a phosphotyrosine (Y184). T394 carries the phosphothreonine modification. Residues 449-465 (EKWLKEDKLECSEELGD) are binding site for the uncoating ATPase, involved in lattice disassembly. Residues 480 to 523 (LRANVPNKVIQCFAETGQVQKIVLYAKKVGYTPDWIFLLRNVMR) are flexible linker. The distal segment stretch occupies residues 524-634 (ISPDQGQQFA…RALEHFTDLY (111 aa)). The tract at residues 524-1675 (ISPDQGQQFA…QPQPGFGYSM (1152 aa)) is heavy chain arm. CHCR repeat units follow at residues 537–683 (VQDE…QICV), 686–828 (ASKY…SEDV), 833–972 (ILVV…PLID), 979–1124 (LSET…VKEA), 1128–1269 (YIKA…FRLA), 1274–1420 (LHIV…LLLN), and 1423–1566 (LMVL…RECF). Residue Y634 is modified to Phosphotyrosine. The segment at 639-1675 (AVVHTHLLNP…QPQPGFGYSM (1037 aa)) is proximal segment. Position 737 is an N6-succinyllysine (K737). An N6-acetyllysine modification is found at K856. Phosphotyrosine is present on Y899. S1167 carries the post-translational modification Phosphoserine. Y1206 is subject to Phosphotyrosine. The involved in binding clathrin light chain stretch occupies residues 1213–1522 (AAKLLYNNVS…YLFKGNNRWK (310 aa)). At S1229 the chain carries Phosphoserine. K1441 carries the N6-acetyllysine; alternate modification. K1441 carries the N6-succinyllysine; alternate modification. A phosphotyrosine mark is found at Y1477 and Y1487. S1494 bears the Phosphoserine mark. Position 1501 is an N6-acetyllysine (K1501). The trimerization stretch occupies residues 1550–1675 (AEELLQWFLQ…QPQPGFGYSM (126 aa)).

The protein belongs to the clathrin heavy chain family. As to quaternary structure, clathrin triskelions, composed of 3 heavy chains and 3 light chains, are the basic subunits of the clathrin coat. In the presence of light chains, hub assembly is influenced by both the pH and the concentration of calcium. Interacts with HIP1. Interacts with DENND1A, DENND1B and DENND1C. Interacts with OCRL. Interacts with ERBB2. Interacts with FKBP6. Interacts with CKAP5 and TACC3 forming the TACC3/ch-TOG/clathrin complex located at spindle inter-microtubules bridges; the complex implicates clathrin triskelions; TACC3 and CLTC are proposed to form a composite microtubule interaction surface. Interacts with ATG16L1 (via N-terminus). Interacts with RFTN1; the interaction occurs in response to pathogens. Interacts with TMEM106B (via N-terminus). Interacts with DNAJC6; this interaction produces a local change in heavy-chain contacts, creating a detectable global distortion of the clathrin coat and leads to the recruitment of HSPA8.

It is found in the cytoplasmic vesicle membrane. The protein localises to the membrane. It localises to the coated pit. Its subcellular location is the melanosome. The protein resides in the cytoplasm. It is found in the cytoskeleton. The protein localises to the spindle. Functionally, clathrin is the major protein of the polyhedral coat of coated pits and vesicles. Two different adapter protein complexes link the clathrin lattice either to the plasma membrane or to the trans-Golgi network. Acts as a component of the TACC3/ch-TOG/clathrin complex proposed to contribute to stabilization of kinetochore fibers of the mitotic spindle by acting as inter-microtubule bridge. The TACC3/ch-TOG/clathrin complex is required for the maintenance of kinetochore fiber tension. Plays a role in early autophagosome formation. Interaction with DNAJC6 mediates the recruitment of HSPA8 to the clathrin lattice and creates local destabilization of the lattice promoting uncoating. In Bos taurus (Bovine), this protein is Clathrin heavy chain 1.